Here is a 95-residue protein sequence, read N- to C-terminus: MLNMNLQFFAHKKGVGSTKNGRDSESKRLGAKRADGQFVKAGNILYRQRGTKIHPGTNVGIGGDDTLYAKVDGVLRFERVGRDKKQASVYPVVNE.

The propeptide occupies 1 to 9 (MLNMNLQFF).

This sequence belongs to the bacterial ribosomal protein bL27 family. The N-terminus is cleaved by ribosomal processing cysteine protease Prp.

The polypeptide is Large ribosomal subunit protein bL27 (Agathobacter rectalis (strain ATCC 33656 / DSM 3377 / JCM 17463 / KCTC 5835 / VPI 0990) (Eubacterium rectale)).